The sequence spans 99 residues: Large ribosomal subunit protein uL23 (99 aa).

This sequence belongs to the universal ribosomal protein uL23 family. Part of the 50S ribosomal subunit. Contacts protein L29, and trigger factor when it is bound to the ribosome.

Functionally, one of the early assembly proteins it binds 23S rRNA. One of the proteins that surrounds the polypeptide exit tunnel on the outside of the ribosome. Forms the main docking site for trigger factor binding to the ribosome. This Blochmanniella floridana protein is Large ribosomal subunit protein uL23.